The chain runs to 88 residues: Cell division topological specificity factor (88 aa).

Belongs to the MinE family.

Prevents the cell division inhibition by proteins MinC and MinD at internal division sites while permitting inhibition at polar sites. This ensures cell division at the proper site by restricting the formation of a division septum at the midpoint of the long axis of the cell. The polypeptide is Cell division topological specificity factor (Salmonella agona (strain SL483)).